The chain runs to 262 residues: Putative hydro-lyase BLi00500/BL02808 (262 aa).

Belongs to the D-glutamate cyclase family.

This chain is Putative hydro-lyase BLi00500/BL02808, found in Bacillus licheniformis (strain ATCC 14580 / DSM 13 / JCM 2505 / CCUG 7422 / NBRC 12200 / NCIMB 9375 / NCTC 10341 / NRRL NRS-1264 / Gibson 46).